Reading from the N-terminus, the 261-residue chain is uncharacterized protein (261 aa).

The first 22 residues, methionine 1 to glycine 22, serve as a signal peptide directing secretion. The N-palmitoyl cysteine moiety is linked to residue cysteine 23. The S-diacylglycerol cysteine moiety is linked to residue cysteine 23.

Belongs to the staphylococcal tandem lipoprotein family.

The protein localises to the cell membrane. This is an uncharacterized protein from Staphylococcus aureus (strain NCTC 8325 / PS 47).